The following is a 161-amino-acid chain: Endoribonuclease YbeY (161 aa).

The Zn(2+) site is built by His-127, His-131, and His-137.

It belongs to the endoribonuclease YbeY family. Requires Zn(2+) as cofactor.

It is found in the cytoplasm. Functionally, single strand-specific metallo-endoribonuclease involved in late-stage 70S ribosome quality control and in maturation of the 3' terminus of the 16S rRNA. This chain is Endoribonuclease YbeY, found in Listeria welshimeri serovar 6b (strain ATCC 35897 / DSM 20650 / CCUG 15529 / CIP 8149 / NCTC 11857 / SLCC 5334 / V8).